Consider the following 315-residue polypeptide: Small ribosomal subunit biogenesis GTPase RsgA (315 aa).

Residues 79 to 243 (LSKESHILGA…LIDTPGIKGF (165 aa)) enclose the CP-type G domain. GTP is bound by residues 128–131 (NKID) and 182–190 (GHSGVGKSS). Residues C267, C272, H274, and C280 each coordinate Zn(2+).

It belongs to the TRAFAC class YlqF/YawG GTPase family. RsgA subfamily. As to quaternary structure, monomer. Associates with 30S ribosomal subunit, binds 16S rRNA. The cofactor is Zn(2+).

Its subcellular location is the cytoplasm. In terms of biological role, one of several proteins that assist in the late maturation steps of the functional core of the 30S ribosomal subunit. Helps release RbfA from mature subunits. May play a role in the assembly of ribosomal proteins into the subunit. Circularly permuted GTPase that catalyzes slow GTP hydrolysis, GTPase activity is stimulated by the 30S ribosomal subunit. In Porphyromonas gingivalis (strain ATCC BAA-308 / W83), this protein is Small ribosomal subunit biogenesis GTPase RsgA.